The sequence spans 255 residues: Ribonuclease HII (255 aa).

Positions 72 to 255 (QYIAGIDEAG…RSFAPVKAHE (184 aa)) constitute an RNase H type-2 domain. Residues Asp78, Glu79, and Asp170 each contribute to the a divalent metal cation site.

Belongs to the RNase HII family. Mn(2+) serves as cofactor. It depends on Mg(2+) as a cofactor.

The protein localises to the cytoplasm. It carries out the reaction Endonucleolytic cleavage to 5'-phosphomonoester.. Functionally, endonuclease that specifically degrades the RNA of RNA-DNA hybrids. This is Ribonuclease HII from Bacillus licheniformis (strain ATCC 14580 / DSM 13 / JCM 2505 / CCUG 7422 / NBRC 12200 / NCIMB 9375 / NCTC 10341 / NRRL NRS-1264 / Gibson 46).